Reading from the N-terminus, the 85-residue chain is Putative regulatory protein THEYE_A0405 (85 aa).

This sequence belongs to the RemA family.

This is Putative regulatory protein THEYE_A0405 from Thermodesulfovibrio yellowstonii (strain ATCC 51303 / DSM 11347 / YP87).